The primary structure comprises 1433 residues: DNA-directed RNA polymerase subunit beta' (1433 aa).

Zn(2+)-binding residues include Cys60, Cys62, Cys75, and Cys78. 3 residues coordinate Mg(2+): Asp449, Asp451, and Asp453. Positions 777, 851, 858, and 861 each coordinate Zn(2+). Acidic residues-rich tracts occupy residues 1383 to 1393 (DSEEEEEELSE) and 1411 to 1433 (EEDEDEDELEEEADDSDDEDDDD). Residues 1383–1433 (DSEEEEEELSELSEAAPVSTATLSKLVAEEDEDEDELEEEADDSDDEDDDD) form a disordered region.

This sequence belongs to the RNA polymerase beta' chain family. The RNAP catalytic core consists of 2 alpha, 1 beta, 1 beta' and 1 omega subunit. When a sigma factor is associated with the core the holoenzyme is formed, which can initiate transcription. It depends on Mg(2+) as a cofactor. Zn(2+) is required as a cofactor.

The catalysed reaction is RNA(n) + a ribonucleoside 5'-triphosphate = RNA(n+1) + diphosphate. In terms of biological role, DNA-dependent RNA polymerase catalyzes the transcription of DNA into RNA using the four ribonucleoside triphosphates as substrates. In Leptospira biflexa serovar Patoc (strain Patoc 1 / Ames), this protein is DNA-directed RNA polymerase subunit beta'.